The primary structure comprises 269 residues: 5'-nucleotidase SurE (269 aa).

Residues Asp-8, Asp-9, Ser-40, and Asn-95 each coordinate a divalent metal cation.

It belongs to the SurE nucleotidase family. Requires a divalent metal cation as cofactor.

The protein resides in the cytoplasm. The enzyme catalyses a ribonucleoside 5'-phosphate + H2O = a ribonucleoside + phosphate. Nucleotidase that shows phosphatase activity on nucleoside 5'-monophosphates. The protein is 5'-nucleotidase SurE of Nitratidesulfovibrio vulgaris (strain DSM 19637 / Miyazaki F) (Desulfovibrio vulgaris).